Here is a 181-residue protein sequence, read N- to C-terminus: Probable inactive acireductone dioxygenase 2 (181 aa).

The protein belongs to the acireductone dioxygenase (ARD) family.

It localises to the cytoplasm. It is found in the nucleus. In terms of biological role, probable inactive acireductone dioxygenase. The protein is Probable inactive acireductone dioxygenase 2 of Sorghum bicolor (Sorghum).